The primary structure comprises 305 residues: D-alanine--D-alanine ligase (305 aa).

One can recognise an ATP-grasp domain in the interval 104-300 (RALFASAGIP…FPELVRWMVE (197 aa)). 131–181 (LPRPFVVKPLNEGSSVGVFIVRDNQPSPLPDWPFDADEVLVESFIPGRELT) contacts ATP. The Mg(2+) site is built by Asp-249, Glu-267, and Asn-269.

Belongs to the D-alanine--D-alanine ligase family. The cofactor is Mg(2+). Mn(2+) is required as a cofactor.

It is found in the cytoplasm. The catalysed reaction is 2 D-alanine + ATP = D-alanyl-D-alanine + ADP + phosphate + H(+). Its pathway is cell wall biogenesis; peptidoglycan biosynthesis. Functionally, cell wall formation. The sequence is that of D-alanine--D-alanine ligase from Paramagnetospirillum magneticum (strain ATCC 700264 / AMB-1) (Magnetospirillum magneticum).